A 161-amino-acid chain; its full sequence is uncharacterized protein (161 aa).

Helical transmembrane passes span 13-35 (VAAV…PHAN) and 40-62 (VFSA…PFIS).

It is found in the cell membrane. This is an uncharacterized protein from Archaeoglobus fulgidus (strain ATCC 49558 / DSM 4304 / JCM 9628 / NBRC 100126 / VC-16).